Consider the following 274-residue polypeptide: Putative hydro-lyase Veis_4744 (274 aa).

Belongs to the D-glutamate cyclase family.

The polypeptide is Putative hydro-lyase Veis_4744 (Verminephrobacter eiseniae (strain EF01-2)).